Reading from the N-terminus, the 95-residue chain is uncharacterized protein (95 aa).

This is an uncharacterized protein from Vaccinia virus (strain Copenhagen) (VACV).